Reading from the N-terminus, the 293-residue chain is 4-hydroxybenzoate octaprenyltransferase (293 aa).

Helical transmembrane passes span 19–39, 43–63, 95–115, 135–155, 158–178, 209–229, 231–251, and 266–286; these read PIGILLLLWPTLWAQWLASNG, WLILWIFVMGVVLMRSAGCVV, LLAAGLSLLAFLLILPLNALV, FFAIPQAYLGVAFGFGIPMSY, LWGEVPAEAWLLLAANVFWAI, LTAIAFCYAATLALLAWVGAL, DFSGWYYAGLAAAGAIAVYHL, and FLHNTWFGAAVFGGIVLHFLL.

Belongs to the UbiA prenyltransferase family. Mg(2+) serves as cofactor.

It localises to the cell inner membrane. It carries out the reaction all-trans-octaprenyl diphosphate + 4-hydroxybenzoate = 4-hydroxy-3-(all-trans-octaprenyl)benzoate + diphosphate. Its pathway is cofactor biosynthesis; ubiquinone biosynthesis. Catalyzes the prenylation of para-hydroxybenzoate (PHB) with an all-trans polyprenyl group. Mediates the second step in the final reaction sequence of ubiquinone-8 (UQ-8) biosynthesis, which is the condensation of the polyisoprenoid side chain with PHB, generating the first membrane-bound Q intermediate 3-octaprenyl-4-hydroxybenzoate. In Thiobacillus denitrificans (strain ATCC 25259 / T1), this protein is 4-hydroxybenzoate octaprenyltransferase.